Here is a 588-residue protein sequence, read N- to C-terminus: Intracellular maltogenic amylase (588 aa).

The Ca(2+) site is built by asparagine 149, serine 155, glycine 174, and aspartate 176. 2 residues coordinate substrate: histidine 249 and arginine 325. Aspartate 327 (nucleophile) is an active-site residue. Glutamate 356 functions as the Proton donor in the catalytic mechanism. Substrate contacts are provided by residues 422–423 (HD), aspartate 467, and arginine 471.

The protein belongs to the glycosyl hydrolase 13 family. BbmA subfamily. In terms of assembly, monomer or homodimer; in equilibrium. The cofactor is Ca(2+).

The protein localises to the cytoplasm. Its function is as follows. Hydrolyzes beta-cyclodextrin to maltose and glucose, soluble starch to maltose and glucose, and pullulan to panose with trace amounts of maltose and glucose. It is also able to hydrolyze acarbose. Can also exhibit a transglycosylation activity transferring glucose or maltose to another moiety of sugars by forming alpha-(1,6)- and alpha-(1,3)-glycosidic linkages upon the hydrolysis of substrate at concentrations of 5% or higher. The polypeptide is Intracellular maltogenic amylase (bbmA) (Bacillus subtilis (strain 168)).